A 401-amino-acid chain; its full sequence is Nodal homolog 3-A (401 aa).

Positions 1–18 (MAFLNLFFCLVFISPLMA) are cleaved as a signal peptide. The propeptide occupies 19–274 (MPPVLQGRKS…KVNGFRRLRR (256 aa)). 4 N-linked (GlcNAc...) asparagine glycosylation sites follow: asparagine 168, asparagine 337, asparagine 341, and asparagine 344. 2 cysteine pairs are disulfide-bonded: cysteine 299/cysteine 365 and cysteine 328/cysteine 396.

Belongs to the TGF-beta family. In terms of assembly, monomer. The propeptide region interacts with bmp4 in a non-covalent manner. Expressed in the epithelial layer of the Spemann organizer during gastrulation.

It is found in the secreted. Exhibits mesoderm-dorsalizing activity and neural-inducing activity, but lacks mesoderm-inducing activity. Regulates the expression of specific mesodermal and neural genes. Induces convergent extension movements at the embryonic midline by activating the fgf signaling pathway to induce t/bra expression in the organizer region. Acts with wnt11 to induce Spemann organizer cells and induce axis formation. The unprocessed protein antagonizes bmp-signaling. The polypeptide is Nodal homolog 3-A (nodal3-a) (Xenopus laevis (African clawed frog)).